The sequence spans 202 residues: MATLFDILNTLNNNNYFENCKRQCSINKSNKTIIDIIPPMDVTMTNDKLIIETELAGISKDHIEIDIKDSILTIQGEKKKNLNKQQQQLVIEKSTTSSTTLDSKEDEASIEEFEDDIKPKSKSTVTTTATKENKEDENKTKLSDKKFISERSFGNFKRYLDLTKVLYQLDLNSINTQFENGLLTITINKKLHYSNTIKININ.

The sHSP domain maps to Lys-31–Asn-202. The interval Thr-96 to Asn-138 is disordered.

It belongs to the small heat shock protein (HSP20) family.

This chain is Small heat shock protein hspG5 (hspG5), found in Dictyostelium discoideum (Social amoeba).